Here is a 681-residue protein sequence, read N- to C-terminus: Oligopeptidase A (681 aa).

Residue His470 coordinates Zn(2+). Residue Glu471 is part of the active site. His474 and His477 together coordinate Zn(2+).

Belongs to the peptidase M3 family. The cofactor is Zn(2+).

The catalysed reaction is Hydrolysis of oligopeptides, with broad specificity. Gly or Ala commonly occur as P1 or P1' residues, but more distant residues are also important, as is shown by the fact that Z-Gly-Pro-Gly-|-Gly-Pro-Ala is cleaved, but not Z-(Gly)(5).. In terms of biological role, may play a specific role in the degradation of signal peptides after they are released from precursor forms of secreted proteins. Can cleave N-acetyl-L-Ala(4). The sequence is that of Oligopeptidase A (prlC) from Haemophilus influenzae (strain ATCC 51907 / DSM 11121 / KW20 / Rd).